A 242-amino-acid polypeptide reads, in one-letter code: Ubiquinone biosynthesis O-methyltransferase (242 aa).

Residues Arg-44, Gly-64, Asp-85, and Met-129 each coordinate S-adenosyl-L-methionine.

This sequence belongs to the methyltransferase superfamily. UbiG/COQ3 family.

The catalysed reaction is a 3-demethylubiquinol + S-adenosyl-L-methionine = a ubiquinol + S-adenosyl-L-homocysteine + H(+). It catalyses the reaction a 3-(all-trans-polyprenyl)benzene-1,2-diol + S-adenosyl-L-methionine = a 2-methoxy-6-(all-trans-polyprenyl)phenol + S-adenosyl-L-homocysteine + H(+). Its pathway is cofactor biosynthesis; ubiquinone biosynthesis. Functionally, O-methyltransferase that catalyzes the 2 O-methylation steps in the ubiquinone biosynthetic pathway. The sequence is that of Ubiquinone biosynthesis O-methyltransferase from Citrobacter koseri (strain ATCC BAA-895 / CDC 4225-83 / SGSC4696).